The chain runs to 123 residues: Large ribosomal subunit protein uL14 (123 aa).

It belongs to the universal ribosomal protein uL14 family. Part of the 50S ribosomal subunit. Forms a cluster with proteins L3 and L19. In the 70S ribosome, L14 and L19 interact and together make contacts with the 16S rRNA in bridges B5 and B8.

Functionally, binds to 23S rRNA. Forms part of two intersubunit bridges in the 70S ribosome. The chain is Large ribosomal subunit protein uL14 from Hamiltonella defensa subsp. Acyrthosiphon pisum (strain 5AT).